We begin with the raw amino-acid sequence, 113 residues long: Insulin-like peptide 02 (113 aa).

The signal sequence occupies residues 1-22 (MFYLTFLLFGAICIGQIQLGQP). Residues 23 to 42 (VKFKVNEDGHRPSVYPIKYR) constitute a propeptide that is removed on maturation. 3 disulfides stabilise this stretch: cysteine 44-cysteine 99, cysteine 56-cysteine 112, and cysteine 98-cysteine 103. A propeptide spans 62–87 (RRKRSIEADIITDKDTANSYFNRVKR) (c peptide).

It belongs to the insulin family.

The protein localises to the secreted. Its function is as follows. Insulin decreases blood glucose concentration. May have evolved to activate insulin receptors (INSR) in vertebrates. Molecular docking studies reveals unique interaction with the human insulin receptor. In vivo, insulin-like peptide injection reduces blood glucose levels in two models of zebrafish diabetes (streptozotocin- and glucose-induced). Also shorter swimming distance of zebrafish larvae, an effect which is not observed with human insulin. This is Insulin-like peptide 02 from Exaiptasia diaphana (Tropical sea anemone).